A 684-amino-acid chain; its full sequence is Threonine--tRNA ligase (684 aa).

Positions 1 to 66 constitute a TGS domain; sequence MTVPATDSWP…DTDAEVVPVA (66 aa). Positions 261–567 are catalytic; it reads DHRKLGSELD…LTEHYAGAFP (307 aa). Zn(2+) contacts are provided by C366, H417, and H544.

The protein belongs to the class-II aminoacyl-tRNA synthetase family. As to quaternary structure, homodimer. Zn(2+) serves as cofactor.

The protein resides in the cytoplasm. It catalyses the reaction tRNA(Thr) + L-threonine + ATP = L-threonyl-tRNA(Thr) + AMP + diphosphate + H(+). Functionally, catalyzes the attachment of threonine to tRNA(Thr) in a two-step reaction: L-threonine is first activated by ATP to form Thr-AMP and then transferred to the acceptor end of tRNA(Thr). Also edits incorrectly charged L-seryl-tRNA(Thr). This chain is Threonine--tRNA ligase, found in Mycobacterium avium (strain 104).